Reading from the N-terminus, the 357-residue chain is MVSGGRVGGGEGEAGEAAEVAVAMVDNEEEVAQAQAPPAAAVAARELVVGYALTSKKAKSFLQPKLRGLARKKGILFVAIDQKRPLSDQGPFDIVLHKLTGREWQQLLEEYREEHPEVTVLDPPGAIEHLLNRQSMLQEVSELDLSDCHGRVGVPKQLFVNTDPSSIPAAVMRAGLSLPLVAKPLVAKSHELSLAYDPISLTKLEPPLVLQEFVNHGGVLFKVYIVGDAIRVVRRFSLPNVDVGDLSNNAGVFRFPRVSCASANADDADLDPHVAELPPRPLLEILARELRRRLGLRLFNIDMIREHGTRDRFYVIDMNYFPGYGKMPGYEHVFTDFLLSLVQKEYKRRPSYSSCEG.

K56 and K98 together coordinate 1D-myo-inositol 1,3,4-trisphosphate. Residues R133 and K183 each contribute to the ATP site. H190 and K222 together coordinate 1D-myo-inositol 1,3,4-trisphosphate. ATP is bound by residues 211 to 222 (QEFVNHGGVLFK), S237, and S262. Mg(2+) is bound by residues D302, D317, and N319. N319 is a binding site for 1D-myo-inositol 1,3,4-trisphosphate.

The protein belongs to the ITPK1 family. As to quaternary structure, monomer. The cofactor is Mg(2+).

The catalysed reaction is 1D-myo-inositol 3,4,5,6-tetrakisphosphate + ATP = 1D-myo-inositol 1,3,4,5,6-pentakisphosphate + ADP + H(+). It carries out the reaction 1D-myo-inositol 1,3,4-trisphosphate + ATP = 1D-myo-inositol 1,3,4,5-tetrakisphosphate + ADP + H(+). The enzyme catalyses 1D-myo-inositol 1,3,4-trisphosphate + ATP = 1D-myo-inositol 1,3,4,6-tetrakisphosphate + ADP + H(+). Its function is as follows. Kinase that can phosphorylate various inositol polyphosphate such as Ins(3,4,5,6)P4 or Ins(1,3,4)P3 and participates in phytic acid biosynthesis in developing seeds. Phytic acid is the primary storage form of phosphorus in cereal grains and other plant seeds. The sequence is that of Inositol-tetrakisphosphate 1-kinase 3 (ITPK3) from Oryza sativa subsp. indica (Rice).